The primary structure comprises 232 residues: GTP cyclohydrolase III (232 aa).

It belongs to the archaeal-type GTP cyclohydrolase family.

It carries out the reaction GTP + 3 H2O = 2-amino-5-formylamino-6-(5-phospho-D-ribosylamino)pyrimidin-4(3H)-one + 2 phosphate + 2 H(+). Its function is as follows. Catalyzes the formation of 2-amino-5-formylamino-6-ribofuranosylamino-4(3H)-pyrimidinone ribonucleotide monophosphate and inorganic phosphate from GTP. Also has an independent pyrophosphate phosphohydrolase activity. The polypeptide is GTP cyclohydrolase III (Saccharolobus islandicus (strain Y.G.57.14 / Yellowstone #1) (Sulfolobus islandicus)).